Consider the following 191-residue polypeptide: COP9 signalosome complex subunit 8 (191 aa).

The 174-residue stretch at M6–L179 folds into the PCI domain.

Belongs to the CSN8 family. In terms of assembly, component of the CSN complex, probably composed of cops1, cops2, cops3, cops4, cops5, cops6, cops7, cops8 and cops9.

It is found in the cytoplasm. It localises to the nucleus. In terms of biological role, component of the COP9 signalosome complex (CSN), a complex involved in various cellular and developmental processes. The CSN complex is an essential regulator of the ubiquitin (Ubl) conjugation pathway by mediating the deneddylation of the cullin subunits of E3 ligase complexes, leading to modify the Ubl ligase activity. The sequence is that of COP9 signalosome complex subunit 8 (cops8) from Danio rerio (Zebrafish).